The sequence spans 534 residues: Peptide chain release factor 3 (534 aa).

The 270-residue stretch at 9–278 folds into the tr-type G domain; that stretch reads SRRRTFAIIS…FFVEHAPPPQ (270 aa). GTP contacts are provided by residues 18–25, 86–90, and 140–143; these read SHPDAGKT, DTPGH, and NKLD.

The protein belongs to the TRAFAC class translation factor GTPase superfamily. Classic translation factor GTPase family. PrfC subfamily.

Its subcellular location is the cytoplasm. Its function is as follows. Increases the formation of ribosomal termination complexes and stimulates activities of RF-1 and RF-2. It binds guanine nucleotides and has strong preference for UGA stop codons. It may interact directly with the ribosome. The stimulation of RF-1 and RF-2 is significantly reduced by GTP and GDP, but not by GMP. The polypeptide is Peptide chain release factor 3 (Stenotrophomonas maltophilia (strain R551-3)).